The chain runs to 170 residues: Translationally-controlled tumor protein homolog (170 aa).

A TCTP domain is found at 1–170 (MLIYSDIITG…WKHGLKETKV (170 aa)).

It belongs to the TCTP family.

It is found in the cytoplasm. Its subcellular location is the cytoskeleton. Its function is as follows. Involved in protein synthesis. Involved in microtubule stabilization. This is Translationally-controlled tumor protein homolog from Neurospora crassa (strain ATCC 24698 / 74-OR23-1A / CBS 708.71 / DSM 1257 / FGSC 987).